Reading from the N-terminus, the 170-residue chain is Adenine phosphoribosyltransferase (170 aa).

Belongs to the purine/pyrimidine phosphoribosyltransferase family. In terms of assembly, homodimer.

It is found in the cytoplasm. The catalysed reaction is AMP + diphosphate = 5-phospho-alpha-D-ribose 1-diphosphate + adenine. It participates in purine metabolism; AMP biosynthesis via salvage pathway; AMP from adenine: step 1/1. Its function is as follows. Catalyzes a salvage reaction resulting in the formation of AMP, that is energically less costly than de novo synthesis. This chain is Adenine phosphoribosyltransferase, found in Cenarchaeum symbiosum (strain A).